The following is a 263-amino-acid chain: Insulin-like growth factor-binding protein 1 (263 aa).

Residues 1-25 form the signal peptide; that stretch reads MPEVLAVRAWPLLLSLAVQLGATVG. Positions 28–109 constitute an IGFBP N-terminal domain; sequence QPWRCAPCSA…TRGQGACMTT (82 aa). 6 disulfide bridges follow: Cys-32/Cys-59, Cys-35/Cys-61, Cys-43/Cys-62, Cys-50/Cys-65, Cys-73/Cys-86, and Cys-80/Cys-106. A disordered region spans residues 102 to 131; that stretch reads GQGACMTTPSDEATDTKDTTSPENVSPESS. Residues Ser-122, Ser-127, Ser-130, Ser-148, and Ser-160 each carry the phosphoserine modification. Polar residues predominate over residues 122–131; sequence SPENVSPESS. A Phosphotyrosine modification is found at Tyr-162. The Thyroglobulin type-1 domain occupies 177–255; the sequence is KEPCQRELYK…SVAVRGDPKC (79 aa). Cystine bridges form between Cys-180–Cys-210, Cys-221–Cys-232, and Cys-234–Cys-255. Ser-246 is modified (phosphoserine). The short motif at 250 to 252 is the Cell attachment site element; that stretch reads RGD.

Binds equally well IGF1 and IGF2. Interacts with integrin ITGA5:ITGB1. Interacts with VHL; this interaction inhibits HIF1A degradation.

The protein localises to the secreted. Multifunctional protein that plays a critical role in regulating the availability of IGFs such as IGF1 and IGF2 to their receptors and thereby regulates IGF-mediated cellular processes including cell migration, proliferation, differentiation or apoptosis in a cell-type specific manner. Also plays a positive role in cell migration by interacting with integrin ITGA5:ITGB1 through its RGD motif. Mechanistically, binding to integrins leads to activation of focal adhesion kinase/PTK2 and stimulation of the mitogen-activated protein kinase (MAPK) pathway. Regulates cardiomyocyte apoptosis by suppressing HIF-1alpha/HIF1A degradation through ubiquitination. The protein is Insulin-like growth factor-binding protein 1 (IGFBP1) of Bos taurus (Bovine).